A 156-amino-acid chain; its full sequence is ATP synthase subunit b (156 aa).

The chain crosses the membrane as a helical span at residues 3 to 23; that stretch reads ITFTIFAQSIAFAALIWIVAT.

Belongs to the ATPase B chain family. In terms of assembly, F-type ATPases have 2 components, F(1) - the catalytic core - and F(0) - the membrane proton channel. F(1) has five subunits: alpha(3), beta(3), gamma(1), delta(1), epsilon(1). F(0) has three main subunits: a(1), b(2) and c(10-14). The alpha and beta chains form an alternating ring which encloses part of the gamma chain. F(1) is attached to F(0) by a central stalk formed by the gamma and epsilon chains, while a peripheral stalk is formed by the delta and b chains.

It localises to the cell inner membrane. Its function is as follows. F(1)F(0) ATP synthase produces ATP from ADP in the presence of a proton or sodium gradient. F-type ATPases consist of two structural domains, F(1) containing the extramembraneous catalytic core and F(0) containing the membrane proton channel, linked together by a central stalk and a peripheral stalk. During catalysis, ATP synthesis in the catalytic domain of F(1) is coupled via a rotary mechanism of the central stalk subunits to proton translocation. Functionally, component of the F(0) channel, it forms part of the peripheral stalk, linking F(1) to F(0). The chain is ATP synthase subunit b from Xylella fastidiosa (strain M12).